The sequence spans 167 residues: Protein MIX23 (167 aa).

A disordered region spans residues 81–108 (QLDQDRNTSKSPLKSQQQLPSSSTTQVS). A compositionally biased stretch (low complexity) spans 89–106 (SKSPLKSQQQLPSSSTTQ).

This sequence belongs to the MIX23 family.

This chain is Protein MIX23 (cid2), found in Schizosaccharomyces pombe (strain 972 / ATCC 24843) (Fission yeast).